The chain runs to 349 residues: AA9 family lytic polysaccharide monooxygenase C (349 aa).

Residues 1-19 (MKSTFGLLALAAAAKLVSA) form the signal peptide. The Cu(2+) site is built by H20 and H102. A disulfide bridge connects residues C62 and C183. O2 is bound at residue H169. Y180 provides a ligand contact to Cu(2+). Residues 233–304 (DGSSSGSSGS…SGSNSGSDSC (72 aa)) are disordered. Composition is skewed to low complexity over residues 234 to 262 (GSSSGSSGSSGSSPATTTAPAVSVTAAPT) and 269 to 304 (TSATPTTFVTATKPATTAAPAAPSASSGSNSGSDSC). The 37-residue stretch at 311-347 (GSVKIYGQCGGQNYSGPTSCEAGLICKEWNPYYHQCV) folds into the CBM1 domain. 2 disulfides stabilise this stretch: C319-C336 and C330-C346. N-linked (GlcNAc...) asparagine glycosylation occurs at N323.

Belongs to the polysaccharide monooxygenase AA9 family. Requires Cu(2+) as cofactor.

Its subcellular location is the secreted. It catalyses the reaction [(1-&gt;4)-beta-D-glucosyl]n+m + reduced acceptor + O2 = 4-dehydro-beta-D-glucosyl-[(1-&gt;4)-beta-D-glucosyl]n-1 + [(1-&gt;4)-beta-D-glucosyl]m + acceptor + H2O.. In terms of biological role, lytic polysaccharide monooxygenase (LPMO) that depolymerizes crystalline and amorphous polysaccharides via the oxidation of scissile alpha- or beta-(1-4)-glycosidic bonds, yielding C4 oxidation products. Catalysis by LPMOs requires the reduction of the active-site copper from Cu(II) to Cu(I) by a reducing agent and H(2)O(2) or O(2) as a cosubstrate. Active on cellulose and cello-oligosaccharides, as well as plant cell wall-derived hemicellulosic polysaccharides. Also active on cello-oligosaccharides such as cellohexaose, cellopentaose or cellotetraose. The sequence is that of AA9 family lytic polysaccharide monooxygenase C from Aspergillus fumigatus (strain ATCC MYA-4609 / CBS 101355 / FGSC A1100 / Af293) (Neosartorya fumigata).